An 84-amino-acid polypeptide reads, in one-letter code: M-zodatoxin-Lt2a (84 aa).

The N-terminal stretch at 1-22 is a signal peptide; sequence MKYFVIALALAVALVCIAESTA. Residues 23-58 constitute a propeptide that is removed on maturation; the sequence is YEVNEELENELDDLDDAAWLAVAEELQGLEDFEESR. The Processing quadruplet motif motif lies at 55–58; sequence EESR.

Post-translationally, cleavage of the propeptide depends on the processing quadruplet motif (XXXR, with at least one of X being E). In terms of tissue distribution, expressed by the venom gland.

The protein localises to the secreted. It has antimicrobial activity against Gram-positive bacteria (A.globiformis VKM Ac-1112 (MIC=0.7 uM), and B.subtilis VKM B-501 (MIC=0.4 uM)), Gram-negative bacteria (E.coli DH5-alpha (MIC=1.0 uM), E.coli MH1 (MIC=0.7 uM), and P.aeruginosa PAO1 (MIC=6.7 uM)), and yeasts (P.pastoris GS115 (MIC=6.7 uM), and S.cerevisiae Y190 (MIC=54 uM)). Also has a strong hemolytic activity against rabbit erythrocytes. Causes paralysis, but is not lethal when injected into insect (M.domestica) larvae. The chain is M-zodatoxin-Lt2a from Lachesana tarabaevi (Spider).